The following is a 574-amino-acid chain: WAP, Kazal, immunoglobulin, Kunitz and NTR domain-containing protein 2 (574 aa).

A signal peptide spans 1–32 (MWALRGCRSGSRWGQGAALLLLLLGVPPRGLA). The WAP domain maps to 37–90 (RYSHAGICPNDMNPNLWVDAQSTCKRECETDQECETYEKCCPNVCGTKSCVAAR). Cystine bridges form between Cys-44-Cys-77, Cys-60-Cys-81, Cys-64-Cys-76, Cys-70-Cys-86, Cys-132-Cys-162, Cys-136-Cys-155, Cys-144-Cys-173, Cys-229-Cys-285, Cys-326-Cys-376, Cys-335-Cys-359, Cys-351-Cys-372, Cys-384-Cys-434, Cys-393-Cys-417, Cys-409-Cys-430, Cys-443-Cys-513, Cys-446-Cys-515, and Cys-457-Cys-564. In terms of domain architecture, Kazal-like spans 124–175 (WDGQPVCKCRDRCEKEPSFTCASDGLTYYNRCYMDAEACSKGITLAVVTCRY). In terms of domain architecture, Ig-like C2-type spans 208-301 (PALLNHPAHQ…GVLRADFPLS (94 aa)). 2 BPTI/Kunitz inhibitor domains span residues 326-376 (CLKP…MLAC) and 384-434 (CSLP…EESC). The 122-residue stretch at 443–564 (CRACKPRQKL…LREVMHKKTC (122 aa)) folds into the NTR domain. Asn-517 carries an N-linked (GlcNAc...) asparagine glycan.

It belongs to the WFIKKN family. As to quaternary structure, interacts with both mature and propeptide myostatin/MSTN.

The protein localises to the secreted. In terms of biological role, protease-inhibitor that contains multiple distinct protease inhibitor domains. Probably has serine protease- and metalloprotease-inhibitor activity. Inhibits the biological activity of mature myostatin, but not activin. This is WAP, Kazal, immunoglobulin, Kunitz and NTR domain-containing protein 2 (WFIKKN2) from Bos taurus (Bovine).